The sequence spans 544 residues: MAKRIIYNENARRALERGIDILAEAVAVTLGPKGRNVVLEKKFGAPQIVNDGVTIAKEIELEDHIENTGVALIRQAASKTNDAAGDGTTTATVLAHAIVKEGLRNVAAGANAILLKRGIDKATGFLVDRIKEHARPVEDSKSIAQVGSISAGNDDEVGQMIAEAMDKVGKEGVISLEEGKSVTTELEITEGMRFDKGYISPYFATDPERMEAIFDEPFLLLTDKKIALVQDLVPVLEQVARAGRPLVIIAEDIEKEALATLVVNRLRGVLNVAAVKAPGFGDRRKAMLEDIAILTGGQLITEDAGLKLENTKLESLGKARRITITKDSTTIVAEGNDVAVKGRVEQIRRQMEETESSYDKEKLQERLAKLSGGVAVVKVGAATETEMKDKKLRLEDAINATKAAVEEGIVPGGGTTLAHLTPELEVWANSNLKDEELTGALIVARALPAPLKRIAENAGQNGAVIAERVKEKAFNVGFNAATNEFVDMFEAGIVDPAKVTRSALQNAASIAGMVLTTECIVVDKPEPKDNAPAGAGAGGGDFDY.

Residues 29-32, 86-90, Gly-413, 479-481, and Asp-495 contribute to the ATP site; these read TLGP, DGTTT, and NAA. The segment at 525-544 is disordered; the sequence is PEPKDNAPAGAGAGGGDFDY. Residues 535–544 show a composition bias toward gly residues; it reads AGAGGGDFDY.

Belongs to the chaperonin (HSP60) family. In terms of assembly, forms a cylinder of 14 subunits composed of two heptameric rings stacked back-to-back. Interacts with the co-chaperonin GroES.

It is found in the cytoplasm. It carries out the reaction ATP + H2O + a folded polypeptide = ADP + phosphate + an unfolded polypeptide.. Functionally, together with its co-chaperonin GroES, plays an essential role in assisting protein folding. The GroEL-GroES system forms a nano-cage that allows encapsulation of the non-native substrate proteins and provides a physical environment optimized to promote and accelerate protein folding. This chain is Chaperonin GroEL 1, found in Nostoc sp. (strain PCC 7120 / SAG 25.82 / UTEX 2576).